Here is a 566-residue protein sequence, read N- to C-terminus: Proline--tRNA ligase 1 (566 aa).

Belongs to the class-II aminoacyl-tRNA synthetase family. ProS type 1 subfamily. In terms of assembly, homodimer.

Its subcellular location is the cytoplasm. The catalysed reaction is tRNA(Pro) + L-proline + ATP = L-prolyl-tRNA(Pro) + AMP + diphosphate. In terms of biological role, catalyzes the attachment of proline to tRNA(Pro) in a two-step reaction: proline is first activated by ATP to form Pro-AMP and then transferred to the acceptor end of tRNA(Pro). As ProRS can inadvertently accommodate and process non-cognate amino acids such as alanine and cysteine, to avoid such errors it has two additional distinct editing activities against alanine. One activity is designated as 'pretransfer' editing and involves the tRNA(Pro)-independent hydrolysis of activated Ala-AMP. The other activity is designated 'posttransfer' editing and involves deacylation of mischarged Ala-tRNA(Pro). The misacylated Cys-tRNA(Pro) is not edited by ProRS. This Bacillus cereus (strain ATCC 14579 / DSM 31 / CCUG 7414 / JCM 2152 / NBRC 15305 / NCIMB 9373 / NCTC 2599 / NRRL B-3711) protein is Proline--tRNA ligase 1.